The primary structure comprises 124 residues: Large ribosomal subunit protein bL12 (124 aa).

The protein belongs to the bacterial ribosomal protein bL12 family. As to quaternary structure, homodimer. Part of the ribosomal stalk of the 50S ribosomal subunit. Forms a multimeric L10(L12)X complex, where L10 forms an elongated spine to which 2 to 4 L12 dimers bind in a sequential fashion. Binds GTP-bound translation factors.

In terms of biological role, forms part of the ribosomal stalk which helps the ribosome interact with GTP-bound translation factors. Is thus essential for accurate translation. This Vesicomyosocius okutanii subsp. Calyptogena okutanii (strain HA) protein is Large ribosomal subunit protein bL12.